Reading from the N-terminus, the 273-residue chain is Putative pyruvate, phosphate dikinase regulatory protein (273 aa).

Residue 153 to 160 coordinates ADP; it reads GISRTSKT.

The protein belongs to the pyruvate, phosphate/water dikinase regulatory protein family. PDRP subfamily.

The enzyme catalyses N(tele)-phospho-L-histidyl/L-threonyl-[pyruvate, phosphate dikinase] + ADP = N(tele)-phospho-L-histidyl/O-phospho-L-threonyl-[pyruvate, phosphate dikinase] + AMP + H(+). It carries out the reaction N(tele)-phospho-L-histidyl/O-phospho-L-threonyl-[pyruvate, phosphate dikinase] + phosphate + H(+) = N(tele)-phospho-L-histidyl/L-threonyl-[pyruvate, phosphate dikinase] + diphosphate. Bifunctional serine/threonine kinase and phosphorylase involved in the regulation of the pyruvate, phosphate dikinase (PPDK) by catalyzing its phosphorylation/dephosphorylation. This Rhizobium leguminosarum bv. trifolii (strain WSM2304) protein is Putative pyruvate, phosphate dikinase regulatory protein.